The sequence spans 252 residues: Phosphoglycolate phosphatase (252 aa).

D13 (nucleophile) is an active-site residue. Positions 13, 15, and 192 each coordinate Mg(2+).

This sequence belongs to the HAD-like hydrolase superfamily. CbbY/CbbZ/Gph/YieH family. Monomer. Mg(2+) serves as cofactor. The cofactor is chloride.

The catalysed reaction is 2-phosphoglycolate + H2O = glycolate + phosphate. The protein operates within organic acid metabolism; glycolate biosynthesis; glycolate from 2-phosphoglycolate: step 1/1. Its function is as follows. Specifically catalyzes the dephosphorylation of 2-phosphoglycolate. Is involved in the dissimilation of the intracellular 2-phosphoglycolate formed during the DNA repair of 3'-phosphoglycolate ends, a major class of DNA lesions induced by oxidative stress. In Salmonella typhimurium (strain LT2 / SGSC1412 / ATCC 700720), this protein is Phosphoglycolate phosphatase.